The primary structure comprises 177 residues: Large ribosomal subunit protein eL20 (177 aa).

This sequence belongs to the eukaryotic ribosomal protein eL20 family.

The sequence is that of Large ribosomal subunit protein eL20 (RpL18A) from Spodoptera frugiperda (Fall armyworm).